A 596-amino-acid polypeptide reads, in one-letter code: SUN domain-containing protein 4 (596 aa).

The helical transmembrane segment at 28–48 threads the bilayer; it reads VSLSLVFLIWGLVFLSTLWIS. Disordered stretches follow at residues 58-98 and 139-158; these read LVDS…LSSD and KQSE…TTGS. Over residues 66–77 the composition is skewed to acidic residues; it reads EPDDERADETAE. Polar residues-rich tracts occupy residues 80–95 and 141–158; these read DATS…NPGL and SEIN…TTGS. Residues 179 to 343 form the SUN domain; it reads SNSRDKSLSG…SLLEVYGVDA (165 aa). Residues 366–396 show a composition bias toward basic and acidic residues; sequence DTEQKEKKTMQAKESFESDEDKSKQKEKEQE. The segment at 366 to 410 is disordered; sequence DTEQKEKKTMQAKESFESDEDKSKQKEKEQEASPENAVVKDEVSL. A coiled-coil region spans residues 475–544; that stretch reads ASKREKEVET…LERLEWMEKK (70 aa). 2 helical membrane-spanning segments follow: residues 545-565 and 576-596; these read GVVV…AVVF and GGLA…ILSL.

Forms homomers and heteromers with SUN3. Interacts with SUN1, SUN2 and TIK.

It is found in the nucleus membrane. It localises to the endoplasmic reticulum membrane. Encodes a member of the mid-SUN subfamily of SUN-domain proteins that is localized to both the nuclear envelope and the ER. It is involved in early seed development and nuclear morphology. [TAIR]. This Arabidopsis thaliana (Mouse-ear cress) protein is SUN domain-containing protein 4.